The sequence spans 180 residues: Beta-lactoglobulin-1 (180 aa).

The first 18 residues, 1–18, serve as a signal peptide directing secretion; the sequence is MKCLLLALGLALMCGIQA. Intrachain disulfides connect Cys84-Cys178 and Cys124-Cys137.

The protein belongs to the calycin superfamily. Lipocalin family. Monomer.

The protein localises to the secreted. Functionally, lactoglobulin is the primary component of whey, it binds retinol and is probably involved in the transport of that molecule. This Equus caballus (Horse) protein is Beta-lactoglobulin-1 (LGB1).